A 394-amino-acid polypeptide reads, in one-letter code: Elongation factor Tu (394 aa).

In terms of domain architecture, tr-type G spans 10–204 (KPHVNVGTIG…HLDSYIPEPE (195 aa)). Residues 19 to 26 (GHVDHGKT) form a G1 region. 19-26 (GHVDHGKT) is a binding site for GTP. Thr-26 lines the Mg(2+) pocket. The interval 60–64 (GITIN) is G2. A G3 region spans residues 81–84 (DCPG). GTP is bound by residues 81-85 (DCPGH) and 136-139 (NKCD). The segment at 136–139 (NKCD) is G4. A G5 region spans residues 174 to 176 (SAL).

This sequence belongs to the TRAFAC class translation factor GTPase superfamily. Classic translation factor GTPase family. EF-Tu/EF-1A subfamily. In terms of assembly, monomer.

The protein localises to the cytoplasm. The catalysed reaction is GTP + H2O = GDP + phosphate + H(+). GTP hydrolase that promotes the GTP-dependent binding of aminoacyl-tRNA to the A-site of ribosomes during protein biosynthesis. The sequence is that of Elongation factor Tu from Cronobacter sakazakii (strain ATCC BAA-894) (Enterobacter sakazakii).